Consider the following 341-residue polypeptide: Paired box protein Pax-9 (341 aa).

A DNA-binding region (paired) is located at residues 4–130 (AFGEVNQLGG…SSISRILRNK (127 aa)). Positions 7–63 (EVNQLGGVFVNGRPLPNAIRLRIVELAQLGIRPCDISRQLRVSHGCVSKILARYNET) are PAI subdomain. The interval 82 to 130 (TVVKHIRTYKQRDPGIFAWEIRDRLLADGVCDKYNVPSVSSISRILRNK) is RED subdomain. Positions 168 to 189 (AAAAKVPTPPGVPAIPGSVAMP) are interaction with KDM5B.

Interacts with KDM5B.

The protein localises to the nucleus. Functionally, transcription factor required for normal development of thymus, parathyroid glands, ultimobranchial bodies, teeth, skeletal elements of skull and larynx as well as distal limbs. The protein is Paired box protein Pax-9 (PAX9) of Daubentonia madagascariensis (Aye-aye).